The primary structure comprises 520 residues: Peptide chain release factor 3 (520 aa).

Positions glutamate 8–threonine 277 constitute a tr-type G domain. Residues serine 17–threonine 24, aspartate 85–histidine 89, and asparagine 139–aspartate 142 each bind GTP.

Belongs to the TRAFAC class translation factor GTPase superfamily. Classic translation factor GTPase family. PrfC subfamily.

Its subcellular location is the cytoplasm. Its function is as follows. Increases the formation of ribosomal termination complexes and stimulates activities of RF-1 and RF-2. It binds guanine nucleotides and has strong preference for UGA stop codons. It may interact directly with the ribosome. The stimulation of RF-1 and RF-2 is significantly reduced by GTP and GDP, but not by GMP. This chain is Peptide chain release factor 3, found in Staphylococcus aureus (strain USA300 / TCH1516).